A 243-amino-acid chain; its full sequence is DNA repair protein RecO (243 aa).

Belongs to the RecO family.

In terms of biological role, involved in DNA repair and RecF pathway recombination. This is DNA repair protein RecO from Geobacter sulfurreducens (strain ATCC 51573 / DSM 12127 / PCA).